Reading from the N-terminus, the 310-residue chain is Glutaminase 1 (310 aa).

Substrate-binding residues include serine 66, asparagine 117, glutamate 161, asparagine 168, tyrosine 192, tyrosine 244, and valine 262. At lysine 294 the chain carries N6-acetyllysine.

It belongs to the glutaminase family. As to quaternary structure, homotetramer.

It carries out the reaction L-glutamine + H2O = L-glutamate + NH4(+). This Escherichia coli O157:H7 protein is Glutaminase 1.